The sequence spans 196 residues: Putative acetyltransferase YJL218W (196 aa).

Position 84 (Asn-84) interacts with acetyl-CoA. The active-site Proton donor/acceptor is the His-114. Acetyl-CoA-binding positions include Gly-141, Ala-159, 164–165, Lys-179, and Arg-182; that span reads IR.

The protein belongs to the transferase hexapeptide repeat family. Homodimer.

The sequence is that of Putative acetyltransferase YJL218W from Saccharomyces cerevisiae (strain ATCC 204508 / S288c) (Baker's yeast).